Consider the following 188-residue polypeptide: Pyridoxal 5'-phosphate synthase subunit PdxT (188 aa).

G47–S49 is a binding site for L-glutamine. C79 serves as the catalytic Nucleophile. L-glutamine is bound by residues R105 and I134–R135. Catalysis depends on charge relay system residues H170 and E172.

It belongs to the glutaminase PdxT/SNO family. In the presence of PdxS, forms a dodecamer of heterodimers. Only shows activity in the heterodimer.

The catalysed reaction is aldehydo-D-ribose 5-phosphate + D-glyceraldehyde 3-phosphate + L-glutamine = pyridoxal 5'-phosphate + L-glutamate + phosphate + 3 H2O + H(+). It carries out the reaction L-glutamine + H2O = L-glutamate + NH4(+). The protein operates within cofactor biosynthesis; pyridoxal 5'-phosphate biosynthesis. In terms of biological role, catalyzes the hydrolysis of glutamine to glutamate and ammonia as part of the biosynthesis of pyridoxal 5'-phosphate. The resulting ammonia molecule is channeled to the active site of PdxS. This chain is Pyridoxal 5'-phosphate synthase subunit PdxT, found in Listeria monocytogenes serotype 4b (strain F2365).